A 436-amino-acid chain; its full sequence is Nucleolar protein 4-like (436 aa).

A disordered region spans residues Met-1 to Pro-184. Over residues Ser-41–Gln-61 the composition is skewed to low complexity. Ser-130 is subject to Phosphoserine. A compositionally biased stretch (acidic residues) spans Ala-160 to Asp-169. Positions His-170–Pro-184 are enriched in basic and acidic residues. Ser-295 bears the Phosphoserine mark. The segment covering Gln-351–Thr-366 has biased composition (polar residues). Residues Gln-351 to Ser-400 form a disordered region. The segment covering Ser-375–Thr-396 has biased composition (low complexity).

This Pongo abelii (Sumatran orangutan) protein is Nucleolar protein 4-like (NOL4L).